The sequence spans 291 residues: MVHKPVLLNEVVEALSPKDGSVYVDATFGGGGYSRRILETAQCVVYAIDQDVVVKKYFDELLQSFPGRLNLAISRFSKLREVVLSFGVDKVDGVVFDLGTSAMQLADASRGFSFMNSGSLDMRMCSSALRDAAMFVNTVPEKEMADVIYQYGGERYSRRVARAIIDARRKCRINNTGDLATIIRSAVPRSRVHPIDPATRTFQAIRIWVNNELEELQAGLETAAEVLKIGGKILVTSFHSLEDRVVKHKFRSLCDMGFSLINKKAIMPTDEEVKNNPRSRSGKLRAIARVE.

Residues 31–33, aspartate 49, phenylalanine 76, aspartate 97, and glutamine 104 contribute to the S-adenosyl-L-methionine site; that span reads GGY.

The protein belongs to the methyltransferase superfamily. RsmH family.

The protein localises to the cytoplasm. It catalyses the reaction cytidine(1402) in 16S rRNA + S-adenosyl-L-methionine = N(4)-methylcytidine(1402) in 16S rRNA + S-adenosyl-L-homocysteine + H(+). In terms of biological role, specifically methylates the N4 position of cytidine in position 1402 (C1402) of 16S rRNA. This is Ribosomal RNA small subunit methyltransferase H from Anaplasma marginale (strain St. Maries).